A 330-amino-acid polypeptide reads, in one-letter code: uncharacterized protein (330 aa).

This sequence to H.influenzae HI_0461.

This is an uncharacterized protein from Escherichia coli (strain K12).